Consider the following 328-residue polypeptide: Probable tRNA pseudouridine synthase B (328 aa).

Residue aspartate 71 is the Nucleophile of the active site. One can recognise a PUA domain in the interval 238–313; that stretch reads LPKIWVRDSA…LVARVDRVIM (76 aa).

Belongs to the pseudouridine synthase TruB family. Type 2 subfamily.

The enzyme catalyses uridine(55) in tRNA = pseudouridine(55) in tRNA. Functionally, could be responsible for synthesis of pseudouridine from uracil-55 in the psi GC loop of transfer RNAs. The sequence is that of Probable tRNA pseudouridine synthase B from Pyrobaculum islandicum (strain DSM 4184 / JCM 9189 / GEO3).